Here is a 200-residue protein sequence, read N- to C-terminus: MPINLYSKAVFLKSAARVNQLPEDSGYEVAFAGRSNAGKSSALNCLTNNKNLARTSKTPGRTQLINLFSLDEQRRLVDLPGYGYAKVAMEVKLEWQKNLAHYLEARQCLRGLILLMDVRHPLKDLDQILVNWALHRELPVHILLTKADKLSRSEVKNAVLKVRQYYELAEHLVSVQAFSSVKKDGVEELISVLDRWYEWN.

Positions 25–199 (SGYEVAFAGR…ISVLDRWYEW (175 aa)) constitute an EngB-type G domain. Residues 33–40 (GRSNAGKS), 60–64 (GRTQL), 78–81 (DLPG), 145–148 (TKAD), and 178–180 (FSS) each bind GTP. Residues serine 40 and threonine 62 each coordinate Mg(2+).

It belongs to the TRAFAC class TrmE-Era-EngA-EngB-Septin-like GTPase superfamily. EngB GTPase family. The cofactor is Mg(2+).

Its function is as follows. Necessary for normal cell division and for the maintenance of normal septation. This is Probable GTP-binding protein EngB from Legionella pneumophila (strain Paris).